The primary structure comprises 75 residues: Small ribosomal subunit protein bS16c (75 aa).

It belongs to the bacterial ribosomal protein bS16 family.

Its subcellular location is the plastid. It localises to the chloroplast. This Cyanidium caldarium (Red alga) protein is Small ribosomal subunit protein bS16c.